Reading from the N-terminus, the 235-residue chain is MEKLEMLYEGKAKQIYATDKADEVVIYYKDDATAFNGEKKGQITDKGVMNNKITSILFEQLEKQGIKTHFIKKLNDREQLCKKVSIVPLEVIVRNVAAGSMAKRLGLEEGTKLKTTVFEFSYKDDELGDPLINSYHAVAIGAATFEEIDTILEMTAKINNILKEAFAKENINLIDFKIEFGKCADGTIVLADEISPDTCRFWDATTGEKLDKDRFRRDLGNVEDAYIEILKRISK.

This sequence belongs to the SAICAR synthetase family.

The catalysed reaction is 5-amino-1-(5-phospho-D-ribosyl)imidazole-4-carboxylate + L-aspartate + ATP = (2S)-2-[5-amino-1-(5-phospho-beta-D-ribosyl)imidazole-4-carboxamido]succinate + ADP + phosphate + 2 H(+). The protein operates within purine metabolism; IMP biosynthesis via de novo pathway; 5-amino-1-(5-phospho-D-ribosyl)imidazole-4-carboxamide from 5-amino-1-(5-phospho-D-ribosyl)imidazole-4-carboxylate: step 1/2. This is Phosphoribosylaminoimidazole-succinocarboxamide synthase from Clostridium botulinum (strain Eklund 17B / Type B).